A 432-amino-acid chain; its full sequence is MRVVILGSGVVGVASAWYLSQAGHEVTVIDRQPGPAEETSAANAGQISPGYAAPWAAPGVPLKAIKWMFQRHAPLAIGLDGTSFQLKWMWQMLRNCDTRHYMENKGRMVRLAEYSRDCLKALRDTTGIQYEGRQGGTLQLFRTAKQYENATRDIAVLEDAGVPYQLLEAKRLAEVEPALAEVSHKLTGGLRLPNDETGDCQLFTTRLAAMAEQAGVTFRFNTAVDALLQEGDRIAGVKCGDEIIKGDAYVMAFGSYSTAMLKGLVDIPVYPLKGYSLTIPIAQEDGAPVSTILDETYKIAITRFDQRIRVGGMAEIVGFNKALLQPRRETLEMVVRDLFPRGGHVEQATFWTGLRPMTPDGTPVVGRTAYKNLWLNTGHGTLGWTMACGSGQLISDLISGRTPAIPYDDLAVARYSPGFTPARPQHLHGAHN.

FAD is bound at residue 3–17; that stretch reads VVILGSGVVGVASAW.

Belongs to the DadA oxidoreductase family. Requires FAD as cofactor.

It carries out the reaction a D-alpha-amino acid + A + H2O = a 2-oxocarboxylate + AH2 + NH4(+). The protein operates within amino-acid degradation; D-alanine degradation; NH(3) and pyruvate from D-alanine: step 1/1. Its function is as follows. Oxidative deamination of D-amino acids. The chain is D-amino acid dehydrogenase from Klebsiella pneumoniae (strain 342).